A 164-amino-acid polypeptide reads, in one-letter code: ATP synthase subunit b 1 (164 aa).

Residues 8–28 (PETWVAVAFVILMGVFAYFGV) traverse the membrane as a helical segment.

This sequence belongs to the ATPase B chain family. In terms of assembly, F-type ATPases have 2 components, F(1) - the catalytic core - and F(0) - the membrane proton channel. F(1) has five subunits: alpha(3), beta(3), gamma(1), delta(1), epsilon(1). F(0) has three main subunits: a(1), b(2) and c(10-14). The alpha and beta chains form an alternating ring which encloses part of the gamma chain. F(1) is attached to F(0) by a central stalk formed by the gamma and epsilon chains, while a peripheral stalk is formed by the delta and b chains.

It localises to the cell inner membrane. F(1)F(0) ATP synthase produces ATP from ADP in the presence of a proton or sodium gradient. F-type ATPases consist of two structural domains, F(1) containing the extramembraneous catalytic core and F(0) containing the membrane proton channel, linked together by a central stalk and a peripheral stalk. During catalysis, ATP synthesis in the catalytic domain of F(1) is coupled via a rotary mechanism of the central stalk subunits to proton translocation. In terms of biological role, component of the F(0) channel, it forms part of the peripheral stalk, linking F(1) to F(0). This is ATP synthase subunit b 1 from Rhodopseudomonas palustris (strain BisB18).